The sequence spans 243 residues: DNA repair protein RecO (243 aa).

The protein belongs to the RecO family.

Its function is as follows. Involved in DNA repair and RecF pathway recombination. The sequence is that of DNA repair protein RecO from Azoarcus sp. (strain BH72).